A 682-amino-acid chain; its full sequence is MARKFDIQKFRNFGIMAHIDAGKTTTSERILFHSGRTHKIGEVHDGGATMDWMEQEKERGITITSAATYVTWKDCELNLIDTPGHVDFTVEVERSLRVLDGAVAVLDAQNGVEPQTETVWRQASKYKVPRIVYVNKMDKTGADFKMCLESLNERLAAHAVAIQLPIGAEANFNGIINLVTMQAYMYDGKQDEEFKVVEIPADMKKEAEEMRHHMIEEVVNFDDEIMEKYLNGNELSEDDIKKCIRKGVLTAEFFPVVCGTSFKNKGVKALLDAVVDYLPSPVDVPPIKGYKDDGSEILIKNEDDGPLAALAFKIATDPYVGKLTFIRVYSGVLKKGSYVLNATKGIKERVSRLVKMHSNNREEIDEIRAGDICAVIGLKDTVTGNSLSSEEKELHLEAMNFAEPVISLAVEPKTKADQEKMAIALSKLSEEDPTFRTYTDDETNQTIISGMGELHLEIIVDRLRREFKVEVNVGAPQVSYRETFTKEADSEGKYIKQSGGRGQYGHVFIKFEPNPEKGFEFVDKIVGGKIPKEYIKPIKAGLEDAMKAGPLSGFPMIDVKATLYDGSYHDVDSSEMAYKIAASMALKEASKTAGLVLLEPIMAVEVTVPEQYFGDAMGDISSRRGSIEGQEQRGNTQVIKAKVPLKEMFGYATDLRSFTQGRGNYVYAFSHYEKAPKSLLKK.

Residues 8–282 (QKFRNFGIMA…AVVDYLPSPV (275 aa)) enclose the tr-type G domain. Residues 17–24 (AHIDAGKT), 81–85 (DTPGH), and 135–138 (NKMD) contribute to the GTP site.

Belongs to the TRAFAC class translation factor GTPase superfamily. Classic translation factor GTPase family. EF-G/EF-2 subfamily.

The protein resides in the cytoplasm. In terms of biological role, catalyzes the GTP-dependent ribosomal translocation step during translation elongation. During this step, the ribosome changes from the pre-translocational (PRE) to the post-translocational (POST) state as the newly formed A-site-bound peptidyl-tRNA and P-site-bound deacylated tRNA move to the P and E sites, respectively. Catalyzes the coordinated movement of the two tRNA molecules, the mRNA and conformational changes in the ribosome. In Malacoplasma penetrans (strain HF-2) (Mycoplasma penetrans), this protein is Elongation factor G.